A 1639-amino-acid chain; its full sequence is Merozoite surface protein 1 (1639 aa).

The first 19 residues, 1 to 19 (MKIIFFLCSFLFFIINTQC), serve as a signal peptide directing secretion. 2 stretches are compositionally biased toward polar residues: residues 58 to 67 (SGTAVTTSTP) and 107 to 119 (NSRR…NSSD). Disordered regions lie at residues 58-78 (SGTA…SGGS) and 94-122 (VASG…DSDA). N-linked (GlcNAc...) asparagine glycosylation is found at Asn-116 and Asn-268. Residues 689 to 764 (KKNIKTEGQS…VPTPPAPVNN (76 aa)) form a disordered region. Polar residues-rich tracts occupy residues 694-704 (TEGQSDNSEPS) and 711-722 (GQATTKPGQQAG). Over residues 730-741 (VQAQAQEQKQAQ) the composition is skewed to low complexity. N-linked (GlcNAc...) asparagine glycans are attached at residues Asn-764, Asn-768, Asn-783, and Asn-844. A disordered region spans residues 893–915 (SMQPLSLTPQDKPEVSANDDTSH). N-linked (GlcNAc...) asparagine glycans are attached at residues Asn-920, Asn-964, Asn-1058, Asn-1165, and Asn-1174. The interval 1002-1116 (QLSFDLYNKY…EESIQTEDNY (115 aa)) is required for binding to host erythrocyte cell membrane. Over residues 1199 to 1212 (VSESGSDTLEQSQP) the composition is skewed to polar residues. Residues 1199–1229 (VSESGSDTLEQSQPKKPASTHVGAESNTITT) form a disordered region. N-linked (GlcNAc...) asparagine glycosylation is found at Asn-1445 and Asn-1526. EGF-like domains lie at 1530–1570 (HQCV…VENP) and 1571–1618 (NPTC…IFCS). 6 cysteine pairs are disulfide-bonded: Cys-1532-Cys-1543, Cys-1537-Cys-1553, Cys-1555-Cys-1566, Cys-1574-Cys-1587, Cys-1581-Cys-1601, and Cys-1603-Cys-1617. Ser-1618 carries GPI-anchor amidated serine lipidation. A propeptide spans 1619–1639 (SSNFLGISFLLILMLILYSFI) (removed in mature form).

In terms of assembly, forms a complex composed of subunits p83, p30, p38, and p42 which remain non-covalently associated; the complex is formed at the merozoite surface prior to egress from host erythrocytes. Forms a complex composed of processed MSP1 subunits, MSP6 subunit p36 and MSP7; the complex is formed at the merozoite surface prior to egress from host erythrocytes. Within the complex, interacts (via subunit p38) with MSP6 subunit p36 and (via subunits p83, p30 and p38) with MSP7 (via subunit p22). Forms a complex composed of MSP1, MSP6, DBLMSP1 and DBLMSP2. Within the complex, interacts (via subunit p38) with DBLMSP1 and DBLMSP2. Forms a complex composed of MSP1, and rhoptry proteins RhopH3, RAP1 and CLAG9/RhopH3. Within the complex, interacts (via subunits p42 and p19) with RhopH3 (via C-terminus). Forms a complex composed of MSP1, MSP6, MSP7, MSP9 and MSP3; within the complex, MSP6 and MSP9 mediate the binding to the host erythrocyte. Interacts (via subunits p19 and p42) with MSP9; the interaction is direct; MSP1 subunits p19 or p42, and MSP9 form a co-ligand complex that interacts with host SLC4A1/Band 3 protein. May interact with PFD6. Interacts with host spectrin. Interacts with host glycophorin GYPA in a sialic acid-independent manner. As to quaternary structure, interacts with host proinflammatory cytokine S100P; the interaction blocks S100P inflammatory and chemotactic activities. In terms of assembly, interacts with host SLC4A1/Band 3 (via 5ABC region) on the host erythrocyte surface in a sialic acid-independent manner. In terms of processing, the p190 precursor is cleaved by SUB1 prior to merozoite egress into 4 subunits p83, p30, p38, and p42 which remain non-covalently associated. SUB1-mediated proteolytic cleavage occurs in an orderly manner; the first cleavage occurs at the p83/p30 site, followed by cleavage at the p30/p38 site, the last cleavage occurs at the p38/p42 site. The order of cleavage is essential for parasite viability. SUB1-mediated processing is essential for merozoite egress. In a second processing step during erythrocyte invasion, p42 is cleaved by SUB2 into p33 and p19; the latter remains attached to the merozoite surface via its GPI-anchor and stays on the surface during the subsequent ring stage.

Its subcellular location is the cell membrane. It is found in the secreted. It localises to the vacuole membrane. Its function is as follows. During the asexual blood stage, involved in merozoite egress from host erythrocytes possibly via its interaction with the host cytoskeleton protein spectrin resulting in the destabilization of the host cytoskeleton and thus leading to erythrocyte cell membrane rupture. Involved in the binding to host erythrocytes and is required for host erythrocyte invasion. By binding to host proinflammatory cytokine S100P may interfere with host immune responses. In terms of biological role, involved in merozoite invasion of host erythrocytes. May play a role in the biogenesis and/or function of the food vacuole during the intraerythrocytic development. This Plasmodium falciparum (isolate Wellcome) protein is Merozoite surface protein 1.